Reading from the N-terminus, the 435-residue chain is Monodehydroascorbate reductase 3, cytosolic (435 aa).

Residues 14-17 (GGVA), E41, R48, K53, I96, and 147-148 (RE) each bind FAD. NAD(+) contacts are provided by residues 172–178 (GGYIGLE), E196, R202, and G261. Position 174 to 178 (174 to 178 (YIGLE)) interacts with NADP(+). Residues R202 and G261 each contribute to the NADP(+) site. D298 is an FAD binding site. Residue 314 to 315 (EH) coordinates NAD(+). 314-315 (EH) serves as a coordination point for NADP(+). V316 provides a ligand contact to FAD. Residue R320 participates in L-ascorbate binding. An FAD-binding site is contributed by Y349. Residue Y349 coordinates NAD(+). Position 349 (Y349) interacts with NADP(+). R351 is a binding site for L-ascorbate.

Belongs to the FAD-dependent oxidoreductase family. FAD is required as a cofactor.

The protein localises to the cytoplasm. The catalysed reaction is 2 monodehydro-L-ascorbate radical + NADH + H(+) = 2 L-ascorbate + NAD(+). Catalyzes the conversion of monodehydroascorbate to ascorbate, oxidizing NADH in the process. Ascorbate is a major antioxidant against reactive oxygen species (ROS) and nitric oxide (NO). Can use NADPH as electron donor, but possesses lower activity compared to NADH as electron donor. The sequence is that of Monodehydroascorbate reductase 3, cytosolic from Oryza sativa subsp. japonica (Rice).